Reading from the N-terminus, the 330-residue chain is Protein TIFY 11f (330 aa).

In terms of domain architecture, Tify 1 spans 61–97; it reads EAAAAAQLKIMYGGRMLVFDDFFPAGGAVVELVRAAA. Positions 124 to 142 match the Jas motif; the sequence is PVVRKVSLQRFVEKRRRMR. The Nuclear localization signal signature appears at 126–133; that stretch reads VRKVSLQR. The Tify 2 domain occupies 228-264; that stretch reads EAAAAAQLKIMYGGRMLVFDDFFPAGGAVVELVRAAA. Residues 267–330 form a disordered region; the sequence is GRDDDGARAR…SGRTDDAAFY (64 aa).

The protein belongs to the TIFY/JAZ family. In terms of processing, ubiquitinated. Targeted for degradation by the SCF(COI1) E3 ubiquitin ligase-proteasome pathway during jasmonate signaling.

It is found in the nucleus. In terms of biological role, repressor of jasmonate responses. The polypeptide is Protein TIFY 11f (Oryza sativa subsp. japonica (Rice)).